Here is a 138-residue protein sequence, read N- to C-terminus: Translation initiation factor 2 subunit beta (138 aa).

This sequence belongs to the eIF-2-beta/eIF-5 family. As to quaternary structure, heterotrimer composed of an alpha, a beta and a gamma chain.

Functionally, eIF-2 functions in the early steps of protein synthesis by forming a ternary complex with GTP and initiator tRNA. This Methanococcus maripaludis (strain DSM 14266 / JCM 13030 / NBRC 101832 / S2 / LL) protein is Translation initiation factor 2 subunit beta.